Here is a 187-residue protein sequence, read N- to C-terminus: MATTLTLSEAVTALQQGGVIAYPTEAVWGLGCDPRQETAVHTLLNIKQRASGKGLILVTAELNTLQDWLDLDTLSPERLHEVQTSWPGPHTWVLPASTRAPHWITGHHNGLAVRISAHPLVSALCRAWNMALISTSANVAGQPPARRREDLDPSLLPHLAGIVDGPTGGLAQPTSIRDARSGHILRL.

The YrdC-like domain maps to 4–187 (TLTLSEAVTA…DARSGHILRL (184 aa)).

It belongs to the SUA5 family. TsaC subfamily.

It is found in the cytoplasm. The enzyme catalyses L-threonine + hydrogencarbonate + ATP = L-threonylcarbamoyladenylate + diphosphate + H2O. In terms of biological role, required for the formation of a threonylcarbamoyl group on adenosine at position 37 (t(6)A37) in tRNAs that read codons beginning with adenine. Catalyzes the conversion of L-threonine, HCO(3)(-)/CO(2) and ATP to give threonylcarbamoyl-AMP (TC-AMP) as the acyladenylate intermediate, with the release of diphosphate. The sequence is that of Threonylcarbamoyl-AMP synthase from Xylella fastidiosa (strain 9a5c).